The following is a 450-amino-acid chain: Glucose-6-phosphate isomerase (450 aa).

E291 functions as the Proton donor in the catalytic mechanism. Active-site residues include H312 and K426.

It belongs to the GPI family.

The protein localises to the cytoplasm. The catalysed reaction is alpha-D-glucose 6-phosphate = beta-D-fructose 6-phosphate. It participates in carbohydrate biosynthesis; gluconeogenesis. Its pathway is carbohydrate degradation; glycolysis; D-glyceraldehyde 3-phosphate and glycerone phosphate from D-glucose: step 2/4. Functionally, catalyzes the reversible isomerization of glucose-6-phosphate to fructose-6-phosphate. This Clostridium perfringens (strain SM101 / Type A) protein is Glucose-6-phosphate isomerase.